Consider the following 348-residue polypeptide: Phospho-2-dehydro-3-deoxyheptonate aldolase, Trp-sensitive (348 aa).

It belongs to the class-I DAHP synthase family.

The catalysed reaction is D-erythrose 4-phosphate + phosphoenolpyruvate + H2O = 7-phospho-2-dehydro-3-deoxy-D-arabino-heptonate + phosphate. Its pathway is metabolic intermediate biosynthesis; chorismate biosynthesis; chorismate from D-erythrose 4-phosphate and phosphoenolpyruvate: step 1/7. Stereospecific condensation of phosphoenolpyruvate (PEP) and D-erythrose-4-phosphate (E4P) giving rise to 3-deoxy-D-arabino-heptulosonate-7-phosphate (DAHP). The protein is Phospho-2-dehydro-3-deoxyheptonate aldolase, Trp-sensitive (aroH) of Shigella flexneri.